The chain runs to 261 residues: Indole-3-glycerol phosphate synthase (261 aa).

This sequence belongs to the TrpC family.

The enzyme catalyses 1-(2-carboxyphenylamino)-1-deoxy-D-ribulose 5-phosphate + H(+) = (1S,2R)-1-C-(indol-3-yl)glycerol 3-phosphate + CO2 + H2O. The protein operates within amino-acid biosynthesis; L-tryptophan biosynthesis; L-tryptophan from chorismate: step 4/5. The sequence is that of Indole-3-glycerol phosphate synthase from Burkholderia pseudomallei (strain 1710b).